Consider the following 417-residue polypeptide: MSTAISPLAPTDVPDLPEIAGVRLATAAAGIRYKGRTDVLLALLDEGTTVAGVFTRSRCPSAPVEWCRARLKDGHHAKAGLALVVNSGNANAFTGKTGRQATKLTAGIAAKAAGCKASDIYLASTGVIGEPLDATKFNGVLETLASEAAPDRWMDAARAIMTTDTFPKVATARVKLGKAAVTINGIAKGAGMIAPDMATMLSFIFTDAPITATALQSLLKSGVEDTFNAVTIDSDTSTSDTLLAFATGAAGARGAPRISRAGDPRLKAFVKAFHGVLADLAEQVARDGEGARKLVEVIVEGATSKASARKIAKSIANSPLVKTAIAGEDANWGRVVMAVGKAGEPADRDKLSIYFNGIRVAKSGARDPSYDEAEVSKAMKNDRIQIKTTLGLGKGRDRVLTCDLTKEYVAINGDYRS.

Substrate is bound by residues Thr162, Lys188, Thr199, Glu289, Asn412, and Ser417. Thr199 functions as the Nucleophile in the catalytic mechanism.

The protein belongs to the ArgJ family. In terms of assembly, heterotetramer of two alpha and two beta chains.

It localises to the cytoplasm. The enzyme catalyses N(2)-acetyl-L-ornithine + L-glutamate = N-acetyl-L-glutamate + L-ornithine. The catalysed reaction is L-glutamate + acetyl-CoA = N-acetyl-L-glutamate + CoA + H(+). It functions in the pathway amino-acid biosynthesis; L-arginine biosynthesis; L-ornithine and N-acetyl-L-glutamate from L-glutamate and N(2)-acetyl-L-ornithine (cyclic): step 1/1. Its pathway is amino-acid biosynthesis; L-arginine biosynthesis; N(2)-acetyl-L-ornithine from L-glutamate: step 1/4. In terms of biological role, catalyzes two activities which are involved in the cyclic version of arginine biosynthesis: the synthesis of N-acetylglutamate from glutamate and acetyl-CoA as the acetyl donor, and of ornithine by transacetylation between N(2)-acetylornithine and glutamate. This is Arginine biosynthesis bifunctional protein ArgJ from Nitrobacter winogradskyi (strain ATCC 25391 / DSM 10237 / CIP 104748 / NCIMB 11846 / Nb-255).